Reading from the N-terminus, the 221-residue chain is Translation initiation factor 6 (221 aa).

Belongs to the eIF-6 family.

In terms of biological role, binds to the 50S ribosomal subunit and prevents its association with the 30S ribosomal subunit to form the 70S initiation complex. This Methanocella arvoryzae (strain DSM 22066 / NBRC 105507 / MRE50) protein is Translation initiation factor 6.